A 422-amino-acid chain; its full sequence is UDP-N-acetylglucosamine 1-carboxyvinyltransferase (422 aa).

Residue 22–23 (KN) coordinates phosphoenolpyruvate. Residue R92 participates in UDP-N-acetyl-alpha-D-glucosamine binding. C116 (proton donor) is an active-site residue. At C116 the chain carries 2-(S-cysteinyl)pyruvic acid O-phosphothioketal. Residues 121–125 (RPIDL), D307, and L329 contribute to the UDP-N-acetyl-alpha-D-glucosamine site.

This sequence belongs to the EPSP synthase family. MurA subfamily.

Its subcellular location is the cytoplasm. The enzyme catalyses phosphoenolpyruvate + UDP-N-acetyl-alpha-D-glucosamine = UDP-N-acetyl-3-O-(1-carboxyvinyl)-alpha-D-glucosamine + phosphate. The protein operates within cell wall biogenesis; peptidoglycan biosynthesis. Functionally, cell wall formation. Adds enolpyruvyl to UDP-N-acetylglucosamine. This is UDP-N-acetylglucosamine 1-carboxyvinyltransferase from Sulfurovum sp. (strain NBC37-1).